We begin with the raw amino-acid sequence, 181 residues long: Ferritin BfrB (181 aa).

The 146-residue stretch at 5–150 folds into the Ferritin-like diiron domain; that stretch reads GALDTKFHAL…TLVRIADRAG (146 aa). Lys10 participates in a covalent cross-link: Isoglutamyl lysine isopeptide (Lys-Gln) (interchain with Q-Cter in protein Pup). Residues Glu22, Glu55, His58, Glu99, and Gln132 each coordinate Fe cation.

The protein belongs to the ferritin family. Prokaryotic subfamily. As to quaternary structure, homooligomer of 24 subunits that are packed together to form an approximately spherical molecule with a central cavity, in which large amounts of iron can be stored.

The catalysed reaction is 4 Fe(2+) + O2 + 4 H(+) = 4 Fe(3+) + 2 H2O. Iron-storage protein that displays ferroxidase activity, catalyzing the oxidation of Fe(2+) ions into Fe(3+) ions, that can then be deposited as a ferric-oxide mineral core within the central cavity of the protein complex. This is Ferritin BfrB (bfrB) from Mycolicibacterium smegmatis (strain ATCC 700084 / mc(2)155) (Mycobacterium smegmatis).